Here is a 38-residue protein sequence, read N- to C-terminus: Cytochrome b6-f complex subunit 5 (38 aa).

The chain crosses the membrane as a helical span at residues 5-25 (LLSGIVLGLIPITLAGLFVTA).

Belongs to the PetG family. In terms of assembly, the 4 large subunits of the cytochrome b6-f complex are cytochrome b6, subunit IV (17 kDa polypeptide, PetD), cytochrome f and the Rieske protein, while the 4 small subunits are PetG, PetL, PetM and PetN. The complex functions as a dimer.

The protein localises to the plastid. It is found in the chloroplast thylakoid membrane. Component of the cytochrome b6-f complex, which mediates electron transfer between photosystem II (PSII) and photosystem I (PSI), cyclic electron flow around PSI, and state transitions. PetG is required for either the stability or assembly of the cytochrome b6-f complex. This Adiantum capillus-veneris (Maidenhair fern) protein is Cytochrome b6-f complex subunit 5.